Reading from the N-terminus, the 48-residue chain is uncharacterized protein (48 aa).

The helical transmembrane segment at I20–H37 threads the bilayer.

Its subcellular location is the membrane. This is an uncharacterized protein from Saccharomyces cerevisiae (strain ATCC 204508 / S288c) (Baker's yeast).